An 804-amino-acid chain; its full sequence is Cyclic di-GMP-binding protein (804 aa).

A signal peptide spans 1 to 18 (MKMVSLIALLVFATGAQA). The Periplasmic portion of the chain corresponds to 19-766 (APIASKAPAH…DWYMHNHPFR (748 aa)). Positions 24-69 (KAPAHQPTGSDLPPLPAAAPVAPAAQPSAQAVDPASAAPASDAGSA) are disordered. The helical transmembrane segment at 767 to 787 (VIVVGLVGCLLVVAVLVRALF) threads the bilayer. Topologically, residues 788–804 (RHAMFRRRQLQEERQKS) are cytoplasmic.

This sequence belongs to the AcsB/BcsB family. Tightly associated with the cellulose synthase catalytic subunit.

Its subcellular location is the cell inner membrane. The protein operates within glycan metabolism; bacterial cellulose biosynthesis. Its function is as follows. Binds the cellulose synthase activator, bis-(3'-5') cyclic diguanylic acid (c-di-GMP). In Komagataeibacter xylinus (Gluconacetobacter xylinus), this protein is Cyclic di-GMP-binding protein (bcsBI).